A 240-amino-acid polypeptide reads, in one-letter code: Ubiquinone biosynthesis O-methyltransferase (240 aa).

R44, G64, D85, and M129 together coordinate S-adenosyl-L-methionine.

Belongs to the methyltransferase superfamily. UbiG/COQ3 family.

It catalyses the reaction a 3-demethylubiquinol + S-adenosyl-L-methionine = a ubiquinol + S-adenosyl-L-homocysteine + H(+). The enzyme catalyses a 3-(all-trans-polyprenyl)benzene-1,2-diol + S-adenosyl-L-methionine = a 2-methoxy-6-(all-trans-polyprenyl)phenol + S-adenosyl-L-homocysteine + H(+). The protein operates within cofactor biosynthesis; ubiquinone biosynthesis. O-methyltransferase that catalyzes the 2 O-methylation steps in the ubiquinone biosynthetic pathway. This Photorhabdus laumondii subsp. laumondii (strain DSM 15139 / CIP 105565 / TT01) (Photorhabdus luminescens subsp. laumondii) protein is Ubiquinone biosynthesis O-methyltransferase.